The primary structure comprises 527 residues: Probable feruloyl esterase B (527 aa).

A signal peptide spans 1–19 (MALLRHLLPVLTVGSAVQS). Cystine bridges form between Cys-31–Cys-76 and Cys-65–Cys-115. N-linked (GlcNAc...) asparagine glycans are attached at residues Asn-56, Asn-86, and Asn-139. Disulfide bonds link Cys-188/Cys-442, Cys-257/Cys-274, Cys-283/Cys-292, and Cys-504/Cys-526. Ser-189 (acyl-ester intermediate) is an active-site residue. Residues Asp-258, Asp-261, Ala-263, Asp-265, and Ile-267 each contribute to the Ca(2+) site. N-linked (GlcNAc...) asparagine glycosylation is present at Asn-277. Residues Asn-312 and Asn-356 are each glycosylated (N-linked (GlcNAc...) asparagine). Catalysis depends on charge relay system residues Asp-401 and His-441.

The protein belongs to the tannase family.

The protein resides in the secreted. It carries out the reaction feruloyl-polysaccharide + H2O = ferulate + polysaccharide.. Functionally, involved in degradation of plant cell walls. Hydrolyzes the feruloyl-arabinose ester bond in arabinoxylans as well as the feruloyl-galactose and feruloyl-arabinose ester bonds in pectin. The polypeptide is Probable feruloyl esterase B (faeB) (Emericella nidulans (strain FGSC A4 / ATCC 38163 / CBS 112.46 / NRRL 194 / M139) (Aspergillus nidulans)).